The chain runs to 420 residues: Serine/threonine-protein kinase PCRK2 (420 aa).

The disordered stretch occupies residues 1-64; the sequence is MKCFLFPLGD…SNTSMSAREN (64 aa). The segment covering 22–36 has biased composition (polar residues); sequence SPTSNFSDVNKSGSD. The segment covering 42–58 has biased composition (low complexity); it reads VSGTSTVSSTGRNSNTS. Thr70 is subject to Phosphothreonine. Residues 81 to 366 enclose the Protein kinase domain; that stretch reads FSRSGMIGEG…EVLEMVTKIV (286 aa). Residues 87 to 95 and Lys115 contribute to the ATP site; that span reads IGEGGFGCV. Tyr164 carries the phosphotyrosine modification. The Proton acceptor role is filled by Asp215. Phosphoserine occurs at positions 219 and 249. Phosphothreonine is present on residues Thr250 and Thr255. A Phosphotyrosine modification is found at Tyr263. Positions 369-396 are disordered; the sequence is SSPGNGGKKPQLVPLKSQETSRVEEGKN. Over residues 387–396 the composition is skewed to basic and acidic residues; sequence ETSRVEEGKN.

This sequence belongs to the protein kinase superfamily. Ser/Thr protein kinase family. Interacts with FLS2.

The protein localises to the cell membrane. It catalyses the reaction L-seryl-[protein] + ATP = O-phospho-L-seryl-[protein] + ADP + H(+). It carries out the reaction L-threonyl-[protein] + ATP = O-phospho-L-threonyl-[protein] + ADP + H(+). In terms of biological role, functions redundantly with PCRK1 in basal resistance against bacterial pathogens and in regulation of plant immunity. Functions together with PCRK1 downstream of the pathogen-associated molecular pattern (PAMP) receptor FLS2. Contributes to the induction of SARD1 and CBP60G, which are transcriptional activator of ICS1, an enzyme involved in salicylate (SA) biosynthesis upon pathogen attack. The chain is Serine/threonine-protein kinase PCRK2 from Arabidopsis thaliana (Mouse-ear cress).